We begin with the raw amino-acid sequence, 209 residues long: ATP-dependent Clp protease proteolytic subunit (209 aa).

The active-site Nucleophile is the Ser111. His136 is an active-site residue.

It belongs to the peptidase S14 family. As to quaternary structure, fourteen ClpP subunits assemble into 2 heptameric rings which stack back to back to give a disk-like structure with a central cavity, resembling the structure of eukaryotic proteasomes.

It is found in the cytoplasm. It catalyses the reaction Hydrolysis of proteins to small peptides in the presence of ATP and magnesium. alpha-casein is the usual test substrate. In the absence of ATP, only oligopeptides shorter than five residues are hydrolyzed (such as succinyl-Leu-Tyr-|-NHMec, and Leu-Tyr-Leu-|-Tyr-Trp, in which cleavage of the -Tyr-|-Leu- and -Tyr-|-Trp bonds also occurs).. Cleaves peptides in various proteins in a process that requires ATP hydrolysis. Has a chymotrypsin-like activity. Plays a major role in the degradation of misfolded proteins. The polypeptide is ATP-dependent Clp protease proteolytic subunit (Dechloromonas aromatica (strain RCB)).